The following is a 512-amino-acid chain: Kynurenine 3-monooxygenase (512 aa).

It belongs to the aromatic-ring hydroxylase family. KMO subfamily. Requires FAD as cofactor.

It is found in the mitochondrion outer membrane. The enzyme catalyses L-kynurenine + NADPH + O2 + H(+) = 3-hydroxy-L-kynurenine + NADP(+) + H2O. It functions in the pathway cofactor biosynthesis; NAD(+) biosynthesis; quinolinate from L-kynurenine: step 1/3. Catalyzes the hydroxylation of L-kynurenine (L-Kyn) to form 3-hydroxy-L-kynurenine (L-3OHKyn). Required for synthesis of quinolinic acid. The polypeptide is Kynurenine 3-monooxygenase (bna4) (Aspergillus fumigatus (strain ATCC MYA-4609 / CBS 101355 / FGSC A1100 / Af293) (Neosartorya fumigata)).